A 343-amino-acid polypeptide reads, in one-letter code: Palmitoyltransferase ZDHHC4 (343 aa).

Residues 1–2 lie on the Lumenal side of the membrane; the sequence is MD. The chain crosses the membrane as a helical span at residues 3–23; it reads FLVLFLLYLALVLLGFVMICI. Over 24–67 the chain is Cytoplasmic; sequence GSKTHYLQGLISRGAQVFSYIIPECLQRAMLSVLHYLFHTRNYT. Residues 68–88 form a helical membrane-spanning segment; sequence FVVLHLILQGMVYTEYTWEIF. The Lumenal segment spans residues 89–95; the sequence is GLCQQLE. A helical membrane pass occupies residues 96–116; it reads FSLYYLFLPYLLLIVNLLFFT. Residues 117 to 196 lie on the Cytoplasmic side of the membrane; sequence LSCVTNPGTI…GAWNTRYFLS (80 aa). The 51-residue stretch at 149 to 199 folds into the DHHC domain; the sequence is VRCPTCDLRKPARSKHCSVCNRCVHRFDHHCVWVNNCIGAWNTRYFLSYLF. The S-palmitoyl cysteine intermediate role is filled by Cys-179. A helical membrane pass occupies residues 197 to 217; the sequence is YLFTLTASAATMAVVSTVFLV. Over 218-255 the chain is Lumenal; the sequence is RLVVMSDVYLQTYVDDLGHLQVVDTVFLVQYLFLTFPR. A helical membrane pass occupies residues 256–276; the sequence is IVFLVGFVVVLSFLLGGYLCF. Topologically, residues 277–343 are cytoplasmic; it reads CLYLAATNQT…ATACYERKEK (67 aa). Positions 340-343 match the Di-lysine motif motif; the sequence is RKEK.

Belongs to the DHHC palmitoyltransferase family. In terms of assembly, interacts with CPT1A.

The protein resides in the endoplasmic reticulum membrane. It localises to the golgi apparatus membrane. It is found in the cell membrane. The catalysed reaction is L-cysteinyl-[protein] + hexadecanoyl-CoA = S-hexadecanoyl-L-cysteinyl-[protein] + CoA. Functionally, palmitoyltransferase that could catalyze the addition of palmitate onto protein substrates including the D(2) dopamine receptor DRD2, GSK3B or MAVS. Mediates GSK3B palmitoylation to prevent its AKT1-mediated phosphorylation leading to activation of the STAT3 signaling pathway. Also catalyzes MAVS palmitoylation which promotes its stabilization and activation by inhibiting 'Lys-48'- but facilitating 'Lys-63'-linked ubiquitination. The chain is Palmitoyltransferase ZDHHC4 from Bos taurus (Bovine).